The primary structure comprises 87 residues: UPF0473 protein PTH_1066 (87 aa).

It belongs to the UPF0473 family.

This Pelotomaculum thermopropionicum (strain DSM 13744 / JCM 10971 / SI) protein is UPF0473 protein PTH_1066.